The chain runs to 276 residues: 2-dehydro-3-deoxyphosphooctonate aldolase (276 aa).

Belongs to the KdsA family.

It is found in the cytoplasm. It carries out the reaction D-arabinose 5-phosphate + phosphoenolpyruvate + H2O = 3-deoxy-alpha-D-manno-2-octulosonate-8-phosphate + phosphate. It functions in the pathway carbohydrate biosynthesis; 3-deoxy-D-manno-octulosonate biosynthesis; 3-deoxy-D-manno-octulosonate from D-ribulose 5-phosphate: step 2/3. Its pathway is bacterial outer membrane biogenesis; lipopolysaccharide biosynthesis. This chain is 2-dehydro-3-deoxyphosphooctonate aldolase, found in Xylella fastidiosa (strain 9a5c).